Reading from the N-terminus, the 892-residue chain is Nitrogen assimilation transcription factor nirA (892 aa).

The segment at 1 to 32 (MGEKLDPELSSDGPHTKSSSKGQGTSTDNAPA) is disordered. A compositionally biased stretch (low complexity) spans 16 to 27 (TKSSSKGQGTST). Residues 42–70 (CIACRRRKSKCDGNLPSCAACSSVYHTTC) constitute a DNA-binding region (zn(2)-C6 fungal-type). 3 disordered regions span residues 646–714 (GPWD…SGPV), 731–761 (AHNE…SAQE), and 842–892 (PNIP…SFQR). Residues 649–674 (DQAASPSTTSDSPPSVSSQSVVATTD) are compositionally biased toward low complexity. 3 stretches are compositionally biased toward polar residues: residues 675-714 (LSQP…SGPV), 746-761 (VSTS…SAQE), and 876-892 (NVNS…SFQR).

The protein localises to the nucleus. Pathway-specific regulatory gene of nitrate assimilation; it activates the transcription of the genes for nitrate and nitrite reductases (niaD and niiA). The protein is Nitrogen assimilation transcription factor nirA (nirA) of Emericella nidulans (strain FGSC A4 / ATCC 38163 / CBS 112.46 / NRRL 194 / M139) (Aspergillus nidulans).